The sequence spans 430 residues: Enolase (430 aa).

Residue glutamine 163 coordinates (2R)-2-phosphoglycerate. Glutamate 205 functions as the Proton donor in the catalytic mechanism. Mg(2+)-binding residues include aspartate 242, glutamate 287, and aspartate 314. Positions 339, 368, 369, and 390 each coordinate (2R)-2-phosphoglycerate. The active-site Proton acceptor is the lysine 339.

Belongs to the enolase family. It depends on Mg(2+) as a cofactor.

It is found in the cytoplasm. The protein resides in the secreted. The protein localises to the cell surface. It carries out the reaction (2R)-2-phosphoglycerate = phosphoenolpyruvate + H2O. It functions in the pathway carbohydrate degradation; glycolysis; pyruvate from D-glyceraldehyde 3-phosphate: step 4/5. Its function is as follows. Catalyzes the reversible conversion of 2-phosphoglycerate (2-PG) into phosphoenolpyruvate (PEP). It is essential for the degradation of carbohydrates via glycolysis. The chain is Enolase from Bacillus pumilus (strain SAFR-032).